A 309-amino-acid chain; its full sequence is L-2-keto-3-deoxyarabonate dehydratase (309 aa).

The active-site Schiff-base intermediate with substrate is K171.

It belongs to the DapA family. Homodimer.

It carries out the reaction 2-dehydro-3-deoxy-L-arabinonate = 2,5-dioxopentanoate + H2O. Functionally, catalyzes the dehydration of L-2-keto-3-deoxyarabonate (L-KDA) to alpha-ketoglutaric semialdehyde (alphaKGSA). Is involved in a degradation pathway of L-arabinose that allows A.brasilense to grow on L-arabinose as a sole carbon source. This Azospirillum brasilense protein is L-2-keto-3-deoxyarabonate dehydratase (araD).